Consider the following 568-residue polypeptide: bZIP transcription factor 60 (568 aa).

2 stretches are compositionally biased toward low complexity: residues 1 to 13 (MAEP…FADL) and 60 to 78 (TTSS…TSSA). Disordered stretches follow at residues 1-29 (MAEP…TLGD) and 45-134 (DFDV…RKKQ). At 1–240 (MAEPDLLAPF…PAKKARKTKK (240 aa)) the chain is on the cytoplasmic side. Residues 103 to 113 (GGKDGKDDEAK) are compositionally biased toward basic and acidic residues. The 61-residue stretch at 111–171 (EAKRRARLVR…AENAALKQQL (61 aa)) folds into the bZIP domain. Positions 113–144 (KRRARLVRNRESAHQSRQRKKQYVEELEGKVK) are basic motif. The interval 150 to 157 (IADLTARI) is leucine-zipper. The chain crosses the membrane as a helical span at residues 241–261 (VAGVSLLGLLFLMMVCGCLVP). Topologically, residues 262-568 (AVNRMYGAAY…LPFKSHSPHL (307 aa)) are lumenal. Residues asparagine 307, asparagine 452, asparagine 456, asparagine 488, and asparagine 499 are each glycosylated (N-linked (GlcNAc...) asparagine). The interval 479 to 510 (AIPLRGSTSNDTDHFKAPPKNHSQSHAGRKPV) is disordered.

Belongs to the bZIP family.

The protein localises to the endoplasmic reticulum membrane. The protein resides in the nucleus. Transcription factor involved in endoplasmic reticulum (ER) stress response. Acts as a ER stress sensor and activates the transcription factor BZIP50 and the chaperone BIP1. The polypeptide is bZIP transcription factor 60 (Oryza sativa subsp. japonica (Rice)).